Consider the following 634-residue polypeptide: Kelch-like protein 22 (634 aa).

Alanine 2 bears the N-acetylalanine mark. A BTB domain is found at 50 to 117 (FDVVLVVEGR…IYTSELELSL (68 aa)). Kelch repeat units lie at residues 299–349 (CVVG…VLNN), 350–399 (FVYL…VVGR), 400–446 (YIYA…TLEG), 448–493 (MYIT…TLLN), 494–544 (KLYV…VLDN), and 545–593 (RIYV…VLTL). Threonine 463 is modified (phosphothreonine). Tyrosine 466 is modified (phosphotyrosine). Position 475 is a phosphothreonine (threonine 475). The disordered stretch occupies residues 600-634 (EPPRGTPDRSQADPDFASEVMSVSDWEEFDNSSED). Threonine 605 carries the post-translational modification Phosphothreonine. A compositionally biased stretch (acidic residues) spans 624 to 634 (DWEEFDNSSED).

Component of the BCR(KLHL22) E3 ubiquitin ligase complex, at least composed of CUL3, KLHL22 and RBX1. Interacts with PLK1. Interacts with DEPDC5 (via DEP domain); the interaction depends on amino acid availability. Interacts with YWHAE; required for the nuclear localization of KLHL22 upon amino acid starvation.

It localises to the cytoplasm. The protein localises to the cytosol. Its subcellular location is the cytoskeleton. It is found in the microtubule organizing center. The protein resides in the centrosome. It localises to the spindle. The protein localises to the nucleus. Its subcellular location is the lysosome. It participates in protein modification; protein ubiquitination. Its function is as follows. Substrate-specific adapter of a BCR (BTB-CUL3-RBX1) E3 ubiquitin ligase complex required for chromosome alignment and localization of PLK1 at kinetochores. The BCR(KLHL22) ubiquitin ligase complex mediates monoubiquitination of PLK1, leading to PLK1 dissociation from phosphoreceptor proteins and subsequent removal from kinetochores, allowing silencing of the spindle assembly checkpoint (SAC) and chromosome segregation. Monoubiquitination of PLK1 does not lead to PLK1 degradation. The BCR(KLHL22) ubiquitin ligase complex is also responsible for the amino acid-stimulated 'Lys-48' polyubiquitination and proteasomal degradation of DEPDC5. Through the degradation of DEPDC5, releases the GATOR1 complex-mediated inhibition of the TORC1 pathway. It is therefore an amino acid-dependent activator within the amino acid-sensing branch of the TORC1 pathway, indirectly regulating different cellular processes including cell growth and autophagy. This chain is Kelch-like protein 22, found in Homo sapiens (Human).